A 305-amino-acid chain; its full sequence is Oxygen-dependent coproporphyrinogen-III oxidase (305 aa).

Ser98 contributes to the substrate binding site. A divalent metal cation is bound by residues His102 and His112. Residue His112 is the Proton donor of the active site. Asn114–Arg116 contributes to the substrate binding site. A divalent metal cation-binding residues include His151 and His181. The tract at residues Tyr246 to Glu281 is important for dimerization. Gly264–Arg266 is a binding site for substrate.

It belongs to the aerobic coproporphyrinogen-III oxidase family. In terms of assembly, homodimer. A divalent metal cation serves as cofactor.

The protein resides in the cytoplasm. The enzyme catalyses coproporphyrinogen III + O2 + 2 H(+) = protoporphyrinogen IX + 2 CO2 + 2 H2O. Its pathway is porphyrin-containing compound metabolism; protoporphyrin-IX biosynthesis; protoporphyrinogen-IX from coproporphyrinogen-III (O2 route): step 1/1. Functionally, involved in the heme biosynthesis. Catalyzes the aerobic oxidative decarboxylation of propionate groups of rings A and B of coproporphyrinogen-III to yield the vinyl groups in protoporphyrinogen-IX. In Vibrio campbellii (strain ATCC BAA-1116), this protein is Oxygen-dependent coproporphyrinogen-III oxidase.